A 271-amino-acid chain; its full sequence is tRNA pseudouridine synthase A (271 aa).

The active-site Nucleophile is Asp-52. Position 110 (Tyr-110) interacts with substrate.

Belongs to the tRNA pseudouridine synthase TruA family. In terms of assembly, homodimer.

It catalyses the reaction uridine(38/39/40) in tRNA = pseudouridine(38/39/40) in tRNA. Functionally, formation of pseudouridine at positions 38, 39 and 40 in the anticodon stem and loop of transfer RNAs. The sequence is that of tRNA pseudouridine synthase A from Maridesulfovibrio salexigens (strain ATCC 14822 / DSM 2638 / NCIMB 8403 / VKM B-1763) (Desulfovibrio salexigens).